We begin with the raw amino-acid sequence, 374 residues long: Queuine tRNA-ribosyltransferase (374 aa).

The Proton acceptor role is filled by Asp89. Residues 89–93 (DSGGF), Asp143, Gln187, and Gly214 contribute to the substrate site. The interval 245 to 251 (GVGKPED) is RNA binding. The active-site Nucleophile is Asp264. Positions 269-273 (TRNAR) are RNA binding; important for wobble base 34 recognition. Zn(2+) contacts are provided by Cys302, Cys304, Cys307, and His333.

The protein belongs to the queuine tRNA-ribosyltransferase family. In terms of assembly, homodimer. Within each dimer, one monomer is responsible for RNA recognition and catalysis, while the other monomer binds to the replacement base PreQ1. Requires Zn(2+) as cofactor.

It carries out the reaction 7-aminomethyl-7-carbaguanine + guanosine(34) in tRNA = 7-aminomethyl-7-carbaguanosine(34) in tRNA + guanine. It functions in the pathway tRNA modification; tRNA-queuosine biosynthesis. Catalyzes the base-exchange of a guanine (G) residue with the queuine precursor 7-aminomethyl-7-deazaguanine (PreQ1) at position 34 (anticodon wobble position) in tRNAs with GU(N) anticodons (tRNA-Asp, -Asn, -His and -Tyr). Catalysis occurs through a double-displacement mechanism. The nucleophile active site attacks the C1' of nucleotide 34 to detach the guanine base from the RNA, forming a covalent enzyme-RNA intermediate. The proton acceptor active site deprotonates the incoming PreQ1, allowing a nucleophilic attack on the C1' of the ribose to form the product. After dissociation, two additional enzymatic reactions on the tRNA convert PreQ1 to queuine (Q), resulting in the hypermodified nucleoside queuosine (7-(((4,5-cis-dihydroxy-2-cyclopenten-1-yl)amino)methyl)-7-deazaguanosine). The chain is Queuine tRNA-ribosyltransferase from Shewanella oneidensis (strain ATCC 700550 / JCM 31522 / CIP 106686 / LMG 19005 / NCIMB 14063 / MR-1).